A 344-amino-acid polypeptide reads, in one-letter code: Nicotinate-nucleotide--dimethylbenzimidazole phosphoribosyltransferase (344 aa).

Glutamate 310 acts as the Proton acceptor in catalysis.

This sequence belongs to the CobT family.

The enzyme catalyses 5,6-dimethylbenzimidazole + nicotinate beta-D-ribonucleotide = alpha-ribazole 5'-phosphate + nicotinate + H(+). It functions in the pathway nucleoside biosynthesis; alpha-ribazole biosynthesis; alpha-ribazole from 5,6-dimethylbenzimidazole: step 1/2. Functionally, catalyzes the synthesis of alpha-ribazole-5'-phosphate from nicotinate mononucleotide (NAMN) and 5,6-dimethylbenzimidazole (DMB). This Chromobacterium violaceum (strain ATCC 12472 / DSM 30191 / JCM 1249 / CCUG 213 / NBRC 12614 / NCIMB 9131 / NCTC 9757 / MK) protein is Nicotinate-nucleotide--dimethylbenzimidazole phosphoribosyltransferase.